Reading from the N-terminus, the 326-residue chain is Probable cell division protein WhiA (326 aa).

The H-T-H motif DNA-binding region spans Ser-275–Ser-308.

It belongs to the WhiA family.

Its function is as follows. Involved in cell division and chromosome segregation. In Renibacterium salmoninarum (strain ATCC 33209 / DSM 20767 / JCM 11484 / NBRC 15589 / NCIMB 2235), this protein is Probable cell division protein WhiA.